A 400-amino-acid chain; its full sequence is Methylthioribose kinase (400 aa).

ATP is bound by residues Asn44, Lys61, and 115–117 (EDL). Asp233 serves as a coordination point for substrate. Residue 250-252 (DPE) coordinates ATP. Arg340 lines the substrate pocket.

Belongs to the methylthioribose kinase family. As to quaternary structure, homodimer.

It carries out the reaction 5-(methylsulfanyl)-D-ribose + ATP = 5-(methylsulfanyl)-alpha-D-ribose 1-phosphate + ADP + H(+). It functions in the pathway amino-acid biosynthesis; L-methionine biosynthesis via salvage pathway; S-methyl-5-thio-alpha-D-ribose 1-phosphate from S-methyl-5'-thioadenosine (hydrolase route): step 2/2. In terms of biological role, catalyzes the phosphorylation of methylthioribose into methylthioribose-1-phosphate. The protein is Methylthioribose kinase of Geobacillus sp. (strain WCH70).